A 113-amino-acid polypeptide reads, in one-letter code: UPF0060 membrane protein CV_3485 (113 aa).

4 consecutive transmembrane segments (helical) span residues 12-32 (GLFVLTALAEIVGCYLPWLVL), 37-57 (SLWLLAPTTLALALFAWLLTL), 67-87 (AAYGGVYVTVAIAWLWLVDGV), and 91-111 (RWDALGCALALAGMAVIMLAP).

It belongs to the UPF0060 family.

Its subcellular location is the cell inner membrane. This chain is UPF0060 membrane protein CV_3485, found in Chromobacterium violaceum (strain ATCC 12472 / DSM 30191 / JCM 1249 / CCUG 213 / NBRC 12614 / NCIMB 9131 / NCTC 9757 / MK).